The sequence spans 214 residues: Large ribosomal subunit protein uL3 (214 aa).

Gln-151 carries the N5-methylglutamine modification.

Belongs to the universal ribosomal protein uL3 family. As to quaternary structure, part of the 50S ribosomal subunit. Forms a cluster with proteins L14 and L19. In terms of processing, methylated by PrmB.

Its function is as follows. One of the primary rRNA binding proteins, it binds directly near the 3'-end of the 23S rRNA, where it nucleates assembly of the 50S subunit. This Saccharophagus degradans (strain 2-40 / ATCC 43961 / DSM 17024) protein is Large ribosomal subunit protein uL3.